A 71-amino-acid polypeptide reads, in one-letter code: Sec-independent protein translocase protein TatA (71 aa).

A helical transmembrane segment spans residues 9-29 (LLLILAIVVILFGASRLPALG). Residues 43-71 (FGGEDEKPTASGNGSTPTQSSSDQGSKQA) form a disordered region. Residues 52-71 (ASGNGSTPTQSSSDQGSKQA) are compositionally biased toward polar residues.

Belongs to the TatA/E family. In terms of assembly, the Tat system comprises two distinct complexes: a TatABC complex, containing multiple copies of TatA, TatB and TatC subunits, and a separate TatA complex, containing only TatA subunits. Substrates initially bind to the TatABC complex, which probably triggers association of the separate TatA complex to form the active translocon.

It is found in the cell inner membrane. Part of the twin-arginine translocation (Tat) system that transports large folded proteins containing a characteristic twin-arginine motif in their signal peptide across membranes. TatA could form the protein-conducting channel of the Tat system. The sequence is that of Sec-independent protein translocase protein TatA from Anaeromyxobacter dehalogenans (strain 2CP-C).